Consider the following 133-residue polypeptide: uncharacterized protein (133 aa).

The next 2 helical transmembrane spans lie at 13–33 (FLLS…LFLS) and 73–93 (FGNP…LLLL).

It is found in the membrane. This is an uncharacterized protein from Saccharomyces cerevisiae (strain ATCC 204508 / S288c) (Baker's yeast).